The sequence spans 180 residues: Adipocyte-related X-chromosome expressed sequence 1 (180 aa).

The Cytoplasmic segment spans residues 1-11 (MNSLLSRANSL). Residues 12 to 32 (FAFTLSVMAALTLGCILTTAF) traverse the membrane as a helical; Signal-anchor for type II membrane protein segment. At 33–180 (KDRSAPVRLH…PDSYEIATTF (148 aa)) the chain is on the lumenal side. Asparagine 141 is a glycosylation site (N-linked (GlcNAc...) asparagine).

It belongs to the SPCS3 family. As to expression, strongly expressed in epididymal white and brown adipose tissue with low levels in heart.

The protein localises to the endoplasmic reticulum membrane. Plays a role in adipogenesis. In Mus musculus (Mouse), this protein is Adipocyte-related X-chromosome expressed sequence 1.